The primary structure comprises 365 residues: 5-hydroxytryptamine receptor 1E (365 aa).

Topologically, residues 1–21 (MNITNCTTEASMAIRPKTITE) are extracellular. Residues asparagine 2 and asparagine 5 are each glycosylated (N-linked (GlcNAc...) asparagine). Residues 22–45 (KMLICMTLVVITTLTTLLNLAVIM) form a helical membrane-spanning segment. Residues 46–59 (AIGTTKKLHQPANY) are Cytoplasmic-facing. The chain crosses the membrane as a helical span at residues 60–84 (LICSLAVTDLLVAVLVMPLSIIYIV). The Extracellular segment spans residues 85 to 92 (MDRWKLGY). The chain crosses the membrane as a helical span at residues 93 to 118 (FLCEVWLSVDMTCCTCSILHLCVIAL). A disulfide bridge connects residues cysteine 95 and cysteine 173. Residues aspartate 102 and cysteine 106 each contribute to the serotonin site. The DRY motif; important for ligand-induced conformation changes motif lies at 119–121 (DRY). The Cytoplasmic portion of the chain corresponds to 119 to 138 (DRYWAITNAIEYARKRTAKR). A helical membrane pass occupies residues 139 to 157 (AALMILTVWTISIFISMPP). Residues 158-179 (LFWRSHRRLSPPPSQCTIQHDH) are Extracellular-facing. Residues 180 to 203 (VIYTIYSTLGAFYIPLTLILILYY) traverse the membrane as a helical segment. Residues 204 to 291 (RIYHAAKSLY…SSTRERKAAR (88 aa)) are Cytoplasmic-facing. The chain crosses the membrane as a helical span at residues 292–316 (ILGLILGAFILSWLPFFIKELIVGL). The Extracellular portion of the chain corresponds to 317–322 (SIYTVS). A helical transmembrane segment spans residues 323-345 (SEVADFLTWLGYVNSLINPLLYT). Residues 340–344 (NPLLY) carry the NPxxY motif; important for ligand-induced conformation changes and signaling motif. At 346–365 (SFNEDFKLAFKKLIRCREHT) the chain is on the cytoplasmic side.

It belongs to the G-protein coupled receptor 1 family. Detected in brain.

The protein resides in the cell membrane. In terms of biological role, G-protein coupled receptor for 5-hydroxytryptamine (serotonin). Also functions as a receptor for various alkaloids and psychoactive substances. Ligand binding causes a conformation change that triggers signaling via guanine nucleotide-binding proteins (G proteins) and modulates the activity of downstream effectors, such as adenylate cyclase. HTR1E is coupled to G(i)/G(o) G alpha proteins and mediates inhibitory neurotransmission by inhibiting adenylate cyclase activity. This is 5-hydroxytryptamine receptor 1E from Homo sapiens (Human).